A 235-amino-acid chain; its full sequence is Aspartate/glutamate leucyltransferase (235 aa).

Belongs to the R-transferase family. Bpt subfamily.

It is found in the cytoplasm. The enzyme catalyses N-terminal L-glutamyl-[protein] + L-leucyl-tRNA(Leu) = N-terminal L-leucyl-L-glutamyl-[protein] + tRNA(Leu) + H(+). The catalysed reaction is N-terminal L-aspartyl-[protein] + L-leucyl-tRNA(Leu) = N-terminal L-leucyl-L-aspartyl-[protein] + tRNA(Leu) + H(+). In terms of biological role, functions in the N-end rule pathway of protein degradation where it conjugates Leu from its aminoacyl-tRNA to the N-termini of proteins containing an N-terminal aspartate or glutamate. In Pseudomonas fluorescens (strain Pf0-1), this protein is Aspartate/glutamate leucyltransferase.